A 386-amino-acid chain; its full sequence is Meiotic chromosome segregation protein C1539.02 (386 aa).

Disordered stretches follow at residues M1–S28, R46–Q85, and D366–G386. The segment covering A15 to S28 has biased composition (polar residues).

The protein resides in the nucleus. In terms of biological role, required for meiotic chromosome segregation. The polypeptide is Meiotic chromosome segregation protein C1539.02 (Schizosaccharomyces pombe (strain 972 / ATCC 24843) (Fission yeast)).